The primary structure comprises 191 residues: Protein Ves (191 aa).

The protein belongs to the Ves family.

This chain is Protein Ves, found in Citrobacter koseri (strain ATCC BAA-895 / CDC 4225-83 / SGSC4696).